A 291-amino-acid polypeptide reads, in one-letter code: Ribose-phosphate pyrophosphokinase (291 aa).

Residues 34–36 (DGE) and 93–94 (RQ) each bind ATP. The Mg(2+) site is built by histidine 127 and aspartate 165. The active site involves lysine 188. Residues arginine 190, aspartate 216, and 220–224 (STGGT) contribute to the D-ribose 5-phosphate site.

The protein belongs to the ribose-phosphate pyrophosphokinase family. Class III (archaeal) subfamily. Requires Mg(2+) as cofactor.

The protein resides in the cytoplasm. The enzyme catalyses D-ribose 5-phosphate + ATP = 5-phospho-alpha-D-ribose 1-diphosphate + AMP + H(+). It functions in the pathway metabolic intermediate biosynthesis; 5-phospho-alpha-D-ribose 1-diphosphate biosynthesis; 5-phospho-alpha-D-ribose 1-diphosphate from D-ribose 5-phosphate (route I): step 1/1. Its function is as follows. Involved in the biosynthesis of the central metabolite phospho-alpha-D-ribosyl-1-pyrophosphate (PRPP) via the transfer of pyrophosphoryl group from ATP to 1-hydroxyl of ribose-5-phosphate (Rib-5-P). The chain is Ribose-phosphate pyrophosphokinase from Sulfolobus acidocaldarius (strain ATCC 33909 / DSM 639 / JCM 8929 / NBRC 15157 / NCIMB 11770).